The primary structure comprises 60 residues: UPF0434 protein CKO_02153 (60 aa).

The protein belongs to the UPF0434 family.

The chain is UPF0434 protein CKO_02153 from Citrobacter koseri (strain ATCC BAA-895 / CDC 4225-83 / SGSC4696).